The sequence spans 395 residues: Chaperone protein DnaJ 2 (395 aa).

A J domain is found at 10-75; sequence NYYADLGVSS…KKRKEYDELK (66 aa). The CR-type zinc finger occupies 165–242; the sequence is GTTIPVELTG…CHGRGTVRKS (78 aa). C178, C181, C194, C197, C216, C219, C230, and C233 together coordinate Zn(2+). CXXCXGXG motif repeat units follow at residues 178–185, 194–201, 216–223, and 230–237; these read CNTCHGSG, CGTCDGTG, CATCGGTG, and CDNCHGRG.

It belongs to the DnaJ family. As to quaternary structure, homodimer. It depends on Zn(2+) as a cofactor.

Its subcellular location is the cytoplasm. Its function is as follows. Participates actively in the response to hyperosmotic and heat shock by preventing the aggregation of stress-denatured proteins and by disaggregating proteins, also in an autonomous, DnaK-independent fashion. Unfolded proteins bind initially to DnaJ; upon interaction with the DnaJ-bound protein, DnaK hydrolyzes its bound ATP, resulting in the formation of a stable complex. GrpE releases ADP from DnaK; ATP binding to DnaK triggers the release of the substrate protein, thus completing the reaction cycle. Several rounds of ATP-dependent interactions between DnaJ, DnaK and GrpE are required for fully efficient folding. Also involved, together with DnaK and GrpE, in the DNA replication of plasmids through activation of initiation proteins. This chain is Chaperone protein DnaJ 2, found in Corynebacterium glutamicum (strain ATCC 13032 / DSM 20300 / JCM 1318 / BCRC 11384 / CCUG 27702 / LMG 3730 / NBRC 12168 / NCIMB 10025 / NRRL B-2784 / 534).